The chain runs to 447 residues: Protein O-GlcNAcase (447 aa).

Positions 1–277 (MLTGVIEGFY…TTGAYLADPD (277 aa)) constitute a GH84 domain. 3 residues coordinate a protein: Gly8, Lys39, and Asp115. Asp116 serves as the catalytic Proton donor. Residues Tyr160, 219–221 (WDN), Asp226, and Asn254 each bind a protein.

This sequence belongs to the glycosyl hydrolase 84 family.

The enzyme catalyses 3-O-(N-acetyl-beta-D-glucosaminyl)-L-seryl-[protein] + H2O = N-acetyl-D-glucosamine + L-seryl-[protein]. The catalysed reaction is 3-O-(N-acetyl-beta-D-glucosaminyl)-L-threonyl-[protein] + H2O = L-threonyl-[protein] + N-acetyl-D-glucosamine. With respect to regulation, inhibited by PUGNac (O-(2-acetamido-2-deoxy-D-glucopyranosylidene)amino-N-phenylcarbamate). Functionally, cleaves GlcNAc from O-glycosylated proteins. Can use p-nitrophenyl-beta-GlcNAc and 4-methylumbelliferone-GlcNAc as substrate (in vitro). The protein is Protein O-GlcNAcase of Oceanicola granulosus (strain ATCC BAA-861 / DSM 15982 / KCTC 12143 / HTCC2516).